Consider the following 135-residue polypeptide: uncharacterized protein (135 aa).

One can recognise an HTH merR-type domain in the interval 2–71 (TYTTAKAAEK…LKDIKRFAEC (70 aa)). Positions 5–24 (TAKAAEKIGISAYTLRFYDK) form a DNA-binding region, H-T-H motif.

This is an uncharacterized protein from Haemophilus influenzae (strain ATCC 51907 / DSM 11121 / KW20 / Rd).